We begin with the raw amino-acid sequence, 1298 residues long: Phosphoribosylformylglycinamidine synthase (1298 aa).

The tract at residues 301–328 is disordered; it reads APFPGASTGSGGEIRDEGATGRGAKPKA. ATP-binding positions include 305-316, 384-386, and A676; these read GASTGSGGEIRD and TGY. Residues D677, E716, N720, and D884 each coordinate Mg(2+). Position 886 (S886) interacts with ATP. Residues 1045-1298 enclose the Glutamine amidotransferase type-1 domain; sequence VAVLREQGVN…MFRNARVWVN (254 aa). C1138 acts as the Nucleophile in catalysis. Residues H1263 and E1265 contribute to the active site.

In the N-terminal section; belongs to the FGAMS family. Monomer.

It localises to the cytoplasm. The enzyme catalyses N(2)-formyl-N(1)-(5-phospho-beta-D-ribosyl)glycinamide + L-glutamine + ATP + H2O = 2-formamido-N(1)-(5-O-phospho-beta-D-ribosyl)acetamidine + L-glutamate + ADP + phosphate + H(+). Its pathway is purine metabolism; IMP biosynthesis via de novo pathway; 5-amino-1-(5-phospho-D-ribosyl)imidazole from N(2)-formyl-N(1)-(5-phospho-D-ribosyl)glycinamide: step 1/2. Functionally, phosphoribosylformylglycinamidine synthase involved in the purines biosynthetic pathway. Catalyzes the ATP-dependent conversion of formylglycinamide ribonucleotide (FGAR) and glutamine to yield formylglycinamidine ribonucleotide (FGAM) and glutamate. This Pseudomonas fluorescens (strain Pf0-1) protein is Phosphoribosylformylglycinamidine synthase.